A 69-amino-acid polypeptide reads, in one-letter code: Large ribosomal subunit protein bL32c (69 aa).

This sequence belongs to the bacterial ribosomal protein bL32 family.

The protein localises to the plastid. The protein resides in the chloroplast. The polypeptide is Large ribosomal subunit protein bL32c (rpl32) (Anthoceros angustus (Hornwort)).